The sequence spans 158 residues: 6,7-dimethyl-8-ribityllumazine synthase (158 aa).

Residues tryptophan 28, 59-61, and 81-83 each bind 5-amino-6-(D-ribitylamino)uracil; these read TVE and VVV. Position 86–87 (86–87) interacts with (2S)-2-hydroxy-3-oxobutyl phosphate; that stretch reads DT. The active-site Proton donor is histidine 89. Residue phenylalanine 114 coordinates 5-amino-6-(D-ribitylamino)uracil. (2S)-2-hydroxy-3-oxobutyl phosphate is bound at residue arginine 128.

The protein belongs to the DMRL synthase family.

It carries out the reaction (2S)-2-hydroxy-3-oxobutyl phosphate + 5-amino-6-(D-ribitylamino)uracil = 6,7-dimethyl-8-(1-D-ribityl)lumazine + phosphate + 2 H2O + H(+). It functions in the pathway cofactor biosynthesis; riboflavin biosynthesis; riboflavin from 2-hydroxy-3-oxobutyl phosphate and 5-amino-6-(D-ribitylamino)uracil: step 1/2. Functionally, catalyzes the formation of 6,7-dimethyl-8-ribityllumazine by condensation of 5-amino-6-(D-ribitylamino)uracil with 3,4-dihydroxy-2-butanone 4-phosphate. This is the penultimate step in the biosynthesis of riboflavin. This is 6,7-dimethyl-8-ribityllumazine synthase from Micrococcus luteus (strain ATCC 4698 / DSM 20030 / JCM 1464 / CCM 169 / CCUG 5858 / IAM 1056 / NBRC 3333 / NCIMB 9278 / NCTC 2665 / VKM Ac-2230) (Micrococcus lysodeikticus).